The sequence spans 66 residues: Large ribosomal subunit protein bL35 (66 aa).

The interval 20 to 41 (GKVMSAQRGKRHGMIKRTKKQI) is disordered. Residues 27-41 (RGKRHGMIKRTKKQI) show a composition bias toward basic residues.

Belongs to the bacterial ribosomal protein bL35 family.

This Rhodopseudomonas palustris (strain BisB5) protein is Large ribosomal subunit protein bL35.